A 392-amino-acid polypeptide reads, in one-letter code: 6-aminohexanoate-dimer hydrolase (392 aa).

The interval 1–27 (MNTPTTGSHPARYPSAAAGEPTLDSWQ) is disordered. Residue Ser112 is part of the active site.

It carries out the reaction [N-(6-aminohexanoyl)](n) + H2O = [N-(6-aminohexanoyl)](n-1) + 6-aminohexanoate. It catalyses the reaction N-(6-aminohexanoyl)-6-aminohexanoate + H2O = 2 6-aminohexanoate. The protein operates within xenobiotic degradation; nylon-6 oligomer degradation. Its function is as follows. Involved in nylon oligomer degradation. The protein is 6-aminohexanoate-dimer hydrolase of Paenarthrobacter ureafaciens.